Here is a 302-residue protein sequence, read N- to C-terminus: Deoxyhypusine hydroxylase (302 aa).

At methionine 1 the chain carries N-acetylmethionine. HEAT-like PBS-type repeat units follow at residues 54-80 (LKHE…VLQD), 87-113 (VRHE…YSSD), 174-200 (ERYR…GLHC), 205-231 (FRHE…ALAR), and 238-264 (VRHE…HADD). Positions 56, 89, and 90 each coordinate Fe cation. Residues histidine 207, histidine 240, and glutamate 241 each contribute to the Fe cation site.

The protein belongs to the deoxyhypusine hydroxylase family. Requires Fe(2+) as cofactor.

The catalysed reaction is [eIF5A protein]-deoxyhypusine + AH2 + O2 = [eIF5A protein]-hypusine + A + H2O. Its pathway is protein modification; eIF5A hypusination. In terms of biological role, catalyzes the hydroxylation of the N(6)-(4-aminobutyl)-L-lysine intermediate produced by deoxyhypusine synthase/DHPS on a critical lysine of the eukaryotic translation initiation factor 5A/eIF-5A. This is the second step of the post-translational modification of that lysine into an unusual amino acid residue named hypusine. Hypusination is unique to mature eIF-5A factor and is essential for its function. The chain is Deoxyhypusine hydroxylase from Homo sapiens (Human).